Reading from the N-terminus, the 565-residue chain is Sulfite reductase [NADPH] hemoprotein beta-component (565 aa).

4 residues coordinate [4Fe-4S] cluster: Cys429, Cys435, Cys474, and Cys478. Cys478 provides a ligand contact to siroheme.

Belongs to the nitrite and sulfite reductase 4Fe-4S domain family. As to quaternary structure, alpha(8)-beta(8). The alpha component is a flavoprotein, the beta component is a hemoprotein. Siroheme is required as a cofactor. It depends on [4Fe-4S] cluster as a cofactor.

The catalysed reaction is hydrogen sulfide + 3 NADP(+) + 3 H2O = sulfite + 3 NADPH + 4 H(+). It functions in the pathway sulfur metabolism; hydrogen sulfide biosynthesis; hydrogen sulfide from sulfite (NADPH route): step 1/1. Functionally, component of the sulfite reductase complex that catalyzes the 6-electron reduction of sulfite to sulfide. This is one of several activities required for the biosynthesis of L-cysteine from sulfate. The sequence is that of Sulfite reductase [NADPH] hemoprotein beta-component from Shewanella loihica (strain ATCC BAA-1088 / PV-4).